Reading from the N-terminus, the 417-residue chain is Valine--pyruvate aminotransferase (417 aa).

Lys-249 is modified (N6-(pyridoxal phosphate)lysine).

The protein belongs to the class-I pyridoxal-phosphate-dependent aminotransferase family. As to quaternary structure, homodimer. Pyridoxal 5'-phosphate serves as cofactor.

Its subcellular location is the cytoplasm. It carries out the reaction L-valine + pyruvate = 3-methyl-2-oxobutanoate + L-alanine. Functionally, involved in the biosynthesis of alanine. The chain is Valine--pyruvate aminotransferase (avtA) from Escherichia coli (strain K12).